A 344-amino-acid chain; its full sequence is Interferon gamma receptor 1-like (344 aa).

The signal sequence occupies residues 1-22 (MSKHAVVQFGVVYALLFPGVFG). At 23–229 (FVPSPTNVSV…QPTPETDKTG (207 aa)) the chain is on the extracellular side. Residues 24–102 (VPSPTNVSVV…TAHDGQEKSE (79 aa)) enclose the Fibronectin type-III domain. Residues Asn29, Asn44, Asn132, and Asn189 are each glycosylated (N-linked (GlcNAc...) asparagine). Residues 230–250 (IIAALIGGATVVLFIIMGFVW) form a helical membrane-spanning segment. Over 251 to 344 (LLWRKWSNIP…SSDYDRPKFL (94 aa)) the chain is Cytoplasmic. The disordered stretch occupies residues 300–344 (TEEDQSVSARDDTGADPPVVSEEGMAGEDSQGLGCSSDYDRPKFL).

The protein belongs to the type II cytokine receptor family. Highly expressed in brain. Also detected in spleen, heart, intestine, gill and kidney. In immune cell populations, detected at low levels in monocytes, peripheral blood leukocytes, splenocytes, neutrophils and mature macrophages.

It is found in the cell membrane. Its function is as follows. Receptor which shows binding specificity for the cytokine ifng1 (interferon gamma 1). This is Interferon gamma receptor 1-like from Carassius auratus (Goldfish).